The chain runs to 515 residues: 2-isopropylmalate synthase (515 aa).

In terms of domain architecture, Pyruvate carboxyltransferase spans 5–268 (LIIFDTTLRD…DLGIDTTQIV (264 aa)). 4 residues coordinate Mn(2+): D14, H202, H204, and N239. A regulatory domain region spans residues 396 to 515 (KFVSLAQRSE…NADKLNPQRA (120 aa)).

This sequence belongs to the alpha-IPM synthase/homocitrate synthase family. LeuA type 1 subfamily. Homodimer. Mn(2+) is required as a cofactor.

The protein resides in the cytoplasm. The catalysed reaction is 3-methyl-2-oxobutanoate + acetyl-CoA + H2O = (2S)-2-isopropylmalate + CoA + H(+). It functions in the pathway amino-acid biosynthesis; L-leucine biosynthesis; L-leucine from 3-methyl-2-oxobutanoate: step 1/4. Functionally, catalyzes the condensation of the acetyl group of acetyl-CoA with 3-methyl-2-oxobutanoate (2-ketoisovalerate) to form 3-carboxy-3-hydroxy-4-methylpentanoate (2-isopropylmalate). This chain is 2-isopropylmalate synthase, found in Burkholderia pseudomallei (strain 1106a).